Consider the following 1333-residue polypeptide: DNA-directed RNA polymerase subunit beta' (1333 aa).

Residues Cys-60, Cys-62, Cys-75, and Cys-78 each contribute to the Zn(2+) site. Mg(2+) contacts are provided by Asp-535, Asp-537, and Asp-539. Cys-901, Cys-983, Cys-990, and Cys-993 together coordinate Zn(2+).

It belongs to the RNA polymerase beta' chain family. The RNAP catalytic core consists of 2 alpha, 1 beta, 1 beta' and 1 omega subunit. When a sigma factor is associated with the core the holoenzyme is formed, which can initiate transcription. Requires Mg(2+) as cofactor. Zn(2+) serves as cofactor.

The enzyme catalyses RNA(n) + a ribonucleoside 5'-triphosphate = RNA(n+1) + diphosphate. Functionally, DNA-dependent RNA polymerase catalyzes the transcription of DNA into RNA using the four ribonucleoside triphosphates as substrates. The protein is DNA-directed RNA polymerase subunit beta' of Corynebacterium efficiens (strain DSM 44549 / YS-314 / AJ 12310 / JCM 11189 / NBRC 100395).